Consider the following 205-residue polypeptide: Endothelial cell-specific chemotaxis regulator (205 aa).

A signal peptide spans 1-24 (MGTAGAMQLCWVILGFLLFRGHNS). Residues 25-124 (QPTMTQTSSS…TSETVLTVAA (100 aa)) lie on the Extracellular side of the membrane. Polar residues-rich tracts occupy residues 49–71 (SSNP…STGT) and 86–101 (SRDT…TTMS). The tract at residues 49 to 101 (SSNPGYIPSSEANRPSHLSSTGTPGAGVPSSGRDGGTSRDTFQTVPPNSTTMS) is disordered. Residues 125–145 (FGVISFIVILVVVVIILVGVV) form a helical membrane-spanning segment. Topologically, residues 146-205 (SLRFKCRKSKESEDPQKPGSSGLSESCSTANGEKDSITLISMKNINMNNGKQSLSAEKVL) are cytoplasmic. A disordered region spans residues 153–175 (KSKESEDPQKPGSSGLSESCSTA). Over residues 163-175 (PGSSGLSESCSTA) the composition is skewed to polar residues. Ser198 bears the Phosphoserine mark.

It belongs to the ECSCR family. As to quaternary structure, interacts with FLNA. Interacts with the 20S proteasome subunit PSMA7. Post-translationally, may be heavily O-glycosylated. Highest expression in endothelial cells. Also detected in vascular smooth muscle, macrophages, lymphocytes, and mast cells.

It is found in the cell membrane. The protein localises to the cytoplasm. Functionally, regulates endothelial chemotaxis and tube formation. Has a role in angiogenesis and apoptosis via modulation of the actin cytoskeleton and facilitation of proteasomal degradation of the apoptosis inhibitors BIRC3/IAP1 and BIRC2/IAP2. This Homo sapiens (Human) protein is Endothelial cell-specific chemotaxis regulator (ECSCR).